The sequence spans 919 residues: 2-oxoadipate dehydrogenase complex component E1 (919 aa).

2 positions are modified to N6-succinyllysine: Lys183 and Lys188. Positions 299 to 320 are disordered; it reads GKTRGRQQSRQDGDYSPDNSAQ. N6-succinyllysine occurs at positions 800 and 818.

The protein belongs to the alpha-ketoglutarate dehydrogenase family. The 2-oxoadipate dehydrogenase complex is composed of OADH (2-oxoadipate dehydrogenase; E1a), DLST (dihydrolipoamide succinyltransferase; E2) and DLD (dihydrolipoamide dehydrogenase; E3). E1a functional unit is a dimer. Interacts with DLST. The cofactor is thiamine diphosphate.

It is found in the mitochondrion. The catalysed reaction is N(6)-[(R)-lipoyl]-L-lysyl-[protein] + 2-oxoadipate + H(+) = N(6)-[(R)-S(8)-glutaryldihydrolipoyl]-L-lysyl-[protein] + CO2. Its pathway is amino-acid degradation. In terms of biological role, 2-oxoadipate dehydrogenase (E1a) component of the 2-oxoadipate dehydrogenase complex (OADHC). Participates in the first step, rate limiting for the overall conversion of 2-oxoadipate (alpha-ketoadipate) to glutaryl-CoA and CO(2) catalyzed by the whole OADHC. Catalyzes the irreversible decarboxylation of 2-oxoadipate via the thiamine diphosphate (ThDP) cofactor and subsequent transfer of the decarboxylated acyl intermediate on an oxidized dihydrolipoyl group that is covalently amidated to the E2 enzyme (dihydrolipoyllysine-residue succinyltransferase or DLST). Can catalyze the decarboxylation of 2-oxoglutarate in vitro, but at a much lower rate than 2-oxoadipate. Responsible for the last step of L-lysine, L-hydroxylysine and L-tryptophan catabolism with the common product being 2-oxoadipate. This chain is 2-oxoadipate dehydrogenase complex component E1 (DHTKD1), found in Homo sapiens (Human).